Reading from the N-terminus, the 154-residue chain is Large ribosomal subunit protein uL13 (154 aa).

Residues 132-154 (PHEAQQPETLDVGAMNRKNKRAA) form a disordered region.

Belongs to the universal ribosomal protein uL13 family. In terms of assembly, part of the 50S ribosomal subunit.

In terms of biological role, this protein is one of the early assembly proteins of the 50S ribosomal subunit, although it is not seen to bind rRNA by itself. It is important during the early stages of 50S assembly. In Rhodopseudomonas palustris (strain HaA2), this protein is Large ribosomal subunit protein uL13.